Reading from the N-terminus, the 532-residue chain is Membrane protein insertase YidC (532 aa).

Transmembrane regions (helical) follow at residues Ile6–Tyr26, Ala317–Phe337, Gly342–Leu362, Gly411–Leu431, Val451–Met473, and Pro496–Phe516.

It belongs to the OXA1/ALB3/YidC family. Type 1 subfamily. In terms of assembly, interacts with the Sec translocase complex via SecD. Specifically interacts with transmembrane segments of nascent integral membrane proteins during membrane integration.

It localises to the cell membrane. Its function is as follows. Required for the insertion and/or proper folding and/or complex formation of integral membrane proteins into the membrane. Involved in integration of membrane proteins that insert both dependently and independently of the Sec translocase complex, as well as at least some lipoproteins. Aids folding of multispanning membrane proteins. The protein is Membrane protein insertase YidC of Lawsonia intracellularis (strain PHE/MN1-00).